We begin with the raw amino-acid sequence, 322 residues long: UDP-N-acetylenolpyruvoylglucosamine reductase (322 aa).

Residues 36-202 (RAGGPAQVLF…TSVLFEGVPG (167 aa)) form the FAD-binding PCMH-type domain. The active site involves Arg-182. Catalysis depends on Ser-231, which acts as the Proton donor. Residue Glu-301 is part of the active site.

This sequence belongs to the MurB family. The cofactor is FAD.

The protein localises to the cytoplasm. The enzyme catalyses UDP-N-acetyl-alpha-D-muramate + NADP(+) = UDP-N-acetyl-3-O-(1-carboxyvinyl)-alpha-D-glucosamine + NADPH + H(+). It participates in cell wall biogenesis; peptidoglycan biosynthesis. In terms of biological role, cell wall formation. The chain is UDP-N-acetylenolpyruvoylglucosamine reductase from Brucella melitensis biotype 2 (strain ATCC 23457).